The chain runs to 221 residues: Leucine rich adaptor protein 1-like (221 aa).

M1 carries the N-acetylmethionine modification. The tract at residues 1-81 is disordered; that stretch reads MEDGPLPDLR…SGSPRRSHPS (81 aa). Composition is skewed to basic and acidic residues over residues 8-21 and 28-39; these read DLRD…RKVP and LRGEEPAPREGA. The segment covering 48–75 has biased composition (low complexity); sequence SCSSSSSCSSFAPSVSSSSSSSPASGSP.

The chain is Leucine rich adaptor protein 1-like (Lurap1l) from Rattus norvegicus (Rat).